A 166-amino-acid polypeptide reads, in one-letter code: Putative 4-hydroxy-4-methyl-2-oxoglutarate aldolase (166 aa).

Residues 74–77 (GDQI) and R96 contribute to the substrate site. D97 is a binding site for a divalent metal cation.

Belongs to the class II aldolase/RraA-like family. Homotrimer. Requires a divalent metal cation as cofactor.

The catalysed reaction is 4-hydroxy-4-methyl-2-oxoglutarate = 2 pyruvate. The enzyme catalyses oxaloacetate + H(+) = pyruvate + CO2. In terms of biological role, catalyzes the aldol cleavage of 4-hydroxy-4-methyl-2-oxoglutarate (HMG) into 2 molecules of pyruvate. Also contains a secondary oxaloacetate (OAA) decarboxylase activity due to the common pyruvate enolate transition state formed following C-C bond cleavage in the retro-aldol and decarboxylation reactions. This Xanthomonas axonopodis pv. citri (strain 306) protein is Putative 4-hydroxy-4-methyl-2-oxoglutarate aldolase.